A 216-amino-acid chain; its full sequence is Large ribosomal subunit protein uL24m (216 aa).

The N-terminal 9 residues, 1–9, are a transit peptide targeting the mitochondrion; sequence MRLTALLSM. Residues 56-89 enclose the KOW domain; the sequence is VVRGDTVEVLSGKEKGKQGKVAQVIRARNWVILE. The segment at 167–186 is disordered; that stretch reads PQQWKDGPKDTSPEDTLQKT.

Belongs to the universal ribosomal protein uL24 family. Component of the mitochondrial ribosome large subunit (39S) which comprises a 16S rRNA and about 50 distinct proteins.

Its subcellular location is the mitochondrion. The polypeptide is Large ribosomal subunit protein uL24m (mrpl24) (Danio rerio (Zebrafish)).